A 516-amino-acid polypeptide reads, in one-letter code: GMP synthase [glutamine-hydrolyzing] (516 aa).

In terms of domain architecture, Glutamine amidotransferase type-1 spans 8–198 (KILILDFGSQ…VVNICGCDTL (191 aa)). C84 functions as the Nucleophile in the catalytic mechanism. Residues H172 and E174 contribute to the active site. Residues 199–391 (WNIENIIEND…LGLPYNMLYR (193 aa)) form the GMPS ATP-PPase domain. ATP is bound at residue 226–232 (SGGVDSS).

As to quaternary structure, homodimer.

The catalysed reaction is XMP + L-glutamine + ATP + H2O = GMP + L-glutamate + AMP + diphosphate + 2 H(+). It functions in the pathway purine metabolism; GMP biosynthesis; GMP from XMP (L-Gln route): step 1/1. In terms of biological role, catalyzes the synthesis of GMP from XMP. This is GMP synthase [glutamine-hydrolyzing] from Francisella tularensis subsp. novicida (strain U112).